Consider the following 267-residue polypeptide: Coiled-coil domain-containing protein 90B, mitochondrial (267 aa).

The N-terminal 47 residues, 1–47 (MKGSQLYRHLSLQGNRLHLHLFQGKKLQLHPSQGHKGTAHRTWKKGF), are a transit peptide targeting the mitochondrion. Residues 142–175 (LEKSEFATLRAENEKMKIELEHVRQHLLNETNRI) adopt a coiled-coil conformation. Residues 244-266 (TVRYMAASVFTCLAIALGFYRLW) traverse the membrane as a helical segment.

It belongs to the CCDC90 family.

It localises to the mitochondrion membrane. This is Coiled-coil domain-containing protein 90B, mitochondrial (ccdc90b) from Xenopus tropicalis (Western clawed frog).